A 932-amino-acid polypeptide reads, in one-letter code: DNA mismatch repair protein MutS (932 aa).

Residues 1-13 (MTTDTDTDVDAGT) are compositionally biased toward acidic residues. The interval 1 to 26 (MTTDTDTDVDAGTDLEPQPEGPPEKM) is disordered. 648–655 (GPNMSGKS) serves as a coordination point for ATP. Residues 865–892 (NQQNQASDDDEIARSPRGADTNTDAGIN) are disordered.

The protein belongs to the DNA mismatch repair MutS family.

Functionally, this protein is involved in the repair of mismatches in DNA. It is possible that it carries out the mismatch recognition step. This protein has a weak ATPase activity. The sequence is that of DNA mismatch repair protein MutS from Haloquadratum walsbyi (strain DSM 16790 / HBSQ001).